We begin with the raw amino-acid sequence, 392 residues long: tRNA (guanine-N(7)-)-methyltransferase (392 aa).

The S-adenosyl-L-methionine site is built by glutamate 123, glutamate 148, and aspartate 175. Substrate contacts are provided by lysine 201 and aspartate 231.

It belongs to the class I-like SAM-binding methyltransferase superfamily. TrmB family.

The catalysed reaction is guanosine(46) in tRNA + S-adenosyl-L-methionine = N(7)-methylguanosine(46) in tRNA + S-adenosyl-L-homocysteine. It functions in the pathway tRNA modification; N(7)-methylguanine-tRNA biosynthesis. In terms of biological role, catalyzes the formation of N(7)-methylguanine at position 46 (m7G46) in tRNA. In Campylobacter jejuni subsp. jejuni serotype O:2 (strain ATCC 700819 / NCTC 11168), this protein is tRNA (guanine-N(7)-)-methyltransferase.